Consider the following 284-residue polypeptide: 2-dehydro-3-deoxyphosphooctonate aldolase (284 aa).

The protein belongs to the KdsA family.

The protein localises to the cytoplasm. It carries out the reaction D-arabinose 5-phosphate + phosphoenolpyruvate + H2O = 3-deoxy-alpha-D-manno-2-octulosonate-8-phosphate + phosphate. It participates in carbohydrate biosynthesis; 3-deoxy-D-manno-octulosonate biosynthesis; 3-deoxy-D-manno-octulosonate from D-ribulose 5-phosphate: step 2/3. Its pathway is bacterial outer membrane biogenesis; lipopolysaccharide biosynthesis. This Edwardsiella ictaluri (strain 93-146) protein is 2-dehydro-3-deoxyphosphooctonate aldolase.